Here is a 643-residue protein sequence, read N- to C-terminus: Transmembrane 9 superfamily member 4 (643 aa).

The first 23 residues, 1–23 (MAAAMIWWPRFLLLLCLTCKGST), serve as a signal peptide directing secretion. Topologically, residues 24–282 (FYVPGVAPIN…TMSDVQIHWF (259 aa)) are extracellular. Residues 283-303 (SIINSVVVVFFLSGILSMIII) form a helical membrane-spanning segment. At 304 to 347 (RTLRKDIANYNKEDDIEDTMEESGWKLVHGDVFRPPQYPMILSS) the chain is on the cytoplasmic side. Tyr313 is subject to Phosphotyrosine. The chain crosses the membrane as a helical span at residues 348–368 (LLGSGIQLFCMILIVIFVAML). Residues 369 to 377 (GMLSPSSRG) are Extracellular-facing. Residues 378 to 398 (ALMTTACFLFMFMGVFGGFSA) form a helical membrane-spanning segment. The Cytoplasmic segment spans residues 399-417 (GRLYRTLKGHRWKKGAFCT). A helical membrane pass occupies residues 418–438 (ATLYPGVVFGICFVLNCFIWG). Topologically, residues 439–450 (KHSSGAVPFPTM) are extracellular. A helical membrane pass occupies residues 451–471 (VALLCMWFGISLPLVYLGYYF). The Cytoplasmic portion of the chain corresponds to 472 to 502 (GFRKQPYDNPVRTNQIPRQIPEQRWYMNRFV). A helical transmembrane segment spans residues 503–523 (GILMAGILPFGAMFIELFFIF). Residues 524–536 (SAIWENQFYYLFG) are Extracellular-facing. Residues 537 to 557 (FLFLVFIILVVSCSQISIVMV) form a helical membrane-spanning segment. The Cytoplasmic segment spans residues 558-571 (YFQLCAEDYRWWWR). A helical transmembrane segment spans residues 572 to 592 (NFLVSGGSAFYVLVYAIFYFV). Residues 593–599 (NKLDIVE) are Extracellular-facing. Residues 600–620 (FIPSLLYFGYTTLMVLSFWLL) traverse the membrane as a helical segment. Residues 621–643 (TGTIGFYAAYMFVRKIYAAVKID) are Cytoplasmic-facing.

The protein belongs to the nonaspanin (TM9SF) (TC 9.A.2) family.

The protein localises to the membrane. It is found in the golgi apparatus. The protein resides in the early endosome. Associates with proteins harboring glycine-rich transmembrane domains and ensures their efficient localization to the cell surface. The sequence is that of Transmembrane 9 superfamily member 4 (Tm9sf4) from Rattus norvegicus (Rat).